The following is a 313-amino-acid chain: Interferon-inducible double-stranded RNA-dependent protein kinase activator A (313 aa).

The interval 1–21 (MSQSRHRAAAPPMEREDSGTF) is disordered. Sufficient for self-association and interaction with TARBP2 regions lie at residues 1-103 (MSQS…KANA), 102-195 (NASI…FSNI), and 195-313 (ISPE…AERK). The residue at position 18 (Ser18) is a Phosphoserine. DRBM domains lie at 34–101 (TPIQ…ILKA), 126–194 (NPIG…KFSN), and 240–308 (DYIQ…YLKI). A phosphoserine mark is found at Ser167, Ser246, and Ser287.

The protein belongs to the PRKRA family. As to quaternary structure, homodimer. Interacts with EIF2AK2/PKR through its DRBM domains. Interacts with DICER1, AGO2 and TARBP2. Also able to interact with dsRNA. Interacts with UBC9. Forms a complex with UBC9 and p53/TP53. Interacts with DUS2L (via DRBM domain). In terms of processing, phosphorylated at Ser-246 in unstressed cells and at Ser-287 in stressed cells. Phosphorylation at Ser-246 appears to be a prerequisite for subsequent phosphorylation at Ser-287. Phosphorylation at Ser-246 and Ser-287 are necessary for activation of EIF2AK2/PKR under conditions of stress.

It is found in the cytoplasm. Its subcellular location is the perinuclear region. Its function is as follows. Activates EIF2AK2/PKR in the absence of double-stranded RNA (dsRNA), leading to phosphorylation of EIF2S1/EFI2-alpha and inhibition of translation and induction of apoptosis. Required for siRNA production by DICER1 and for subsequent siRNA-mediated post-transcriptional gene silencing. Does not seem to be required for processing of pre-miRNA to miRNA by DICER1. Promotes UBC9-p53/TP53 association and sumoylation and phosphorylation of p53/TP53 at 'Lys-386' at 'Ser-392' respectively and enhances its activity in a EIF2AK2/PKR-dependent manner. The polypeptide is Interferon-inducible double-stranded RNA-dependent protein kinase activator A (PRKRA) (Bos taurus (Bovine)).